Consider the following 446-residue polypeptide: Zinc finger protein BALDIBIS (446 aa).

The interval 20–53 is disordered; it reads EHIAPNPNPNPNPTSSNSAKRKRNLPGNPDPDAE. At serine 58 the chain carries Phosphoserine. 2 C2H2-type zinc fingers span residues 68-90 and 110-140; these read FICE…RRGH and YICP…SRKH. A Nuclear localization signal motif is present at residues 132–139; that stretch reads IKKHFSRK. A C2H2-type 2; degenerate zinc finger spans residues 145–168; the sequence is WKCDKCSKKYAVMSDWKAHSKICG. Residues cysteine 147, cysteine 150, histidine 163, cysteine 167, cysteine 174, cysteine 176, histidine 189, and cysteine 193 each coordinate Zn(2+). The CCHC-type 2; atypical zinc finger occupies 172–195; sequence YRCDCGTLFSRKDSFITHRAFCDA. Positions 182-194 are SHR-binding; that stretch reads RKDSFITHRAFCD. Residues 425–446 are disordered; that stretch reads HNLPDSSPPASTDGTPTADMNQ. Over residues 427 to 446 the composition is skewed to polar residues; it reads LPDSSPPASTDGTPTADMNQ.

In terms of assembly, binds to RGA and SCL3 competitively in the nucleus. In terms of tissue distribution, expressed in roots, especially in vascular initials, cortex, endodermis, and quiescent center (QC).

It localises to the nucleus. Transcription factor that, together with JKD, regulates tissue boundaries and asymmetric cell division in roots by a rapid up-regulation of 'SCARECROW' (SCR), thus controlling the nuclear localization of 'SHORT-ROOT' (SHR) and restricting its action. Confines CYCD6 expression to the cortex-endodermis initial/daughter (CEI/CEID) tissues. Binds DNA via its zinc fingers. Recognizes and binds to SCL3 promoter sequence 5'-AGACAA-3' to promote its expression when in complex with RGA. The chain is Zinc finger protein BALDIBIS from Arabidopsis thaliana (Mouse-ear cress).